A 100-amino-acid polypeptide reads, in one-letter code: Small ribosomal subunit protein uS14 (100 aa).

Belongs to the universal ribosomal protein uS14 family. Part of the 30S ribosomal subunit. Contacts proteins S3 and S10.

Functionally, binds 16S rRNA, required for the assembly of 30S particles and may also be responsible for determining the conformation of the 16S rRNA at the A site. The sequence is that of Small ribosomal subunit protein uS14 from Prochlorococcus marinus (strain NATL2A).